Here is a 219-residue protein sequence, read N- to C-terminus: Octanoyltransferase (219 aa).

Residues 34 to 209 (SESPDELWIV…TFSQLLGYQH (176 aa)) form the BPL/LPL catalytic domain. Substrate-binding positions include 73-80 (RGGQVTYH), 140-142 (SLG), and 153-155 (GLA). Cysteine 171 serves as the catalytic Acyl-thioester intermediate.

The protein belongs to the LipB family.

The protein localises to the cytoplasm. The catalysed reaction is octanoyl-[ACP] + L-lysyl-[protein] = N(6)-octanoyl-L-lysyl-[protein] + holo-[ACP] + H(+). It functions in the pathway protein modification; protein lipoylation via endogenous pathway; protein N(6)-(lipoyl)lysine from octanoyl-[acyl-carrier-protein]: step 1/2. Its function is as follows. Catalyzes the transfer of endogenously produced octanoic acid from octanoyl-acyl-carrier-protein onto the lipoyl domains of lipoate-dependent enzymes. Lipoyl-ACP can also act as a substrate although octanoyl-ACP is likely to be the physiological substrate. The polypeptide is Octanoyltransferase (Shewanella putrefaciens (strain CN-32 / ATCC BAA-453)).